The following is a 142-amino-acid chain: Large ribosomal subunit protein uL11 (142 aa).

Belongs to the universal ribosomal protein uL11 family. As to quaternary structure, part of the ribosomal stalk of the 50S ribosomal subunit. Interacts with L10 and the large rRNA to form the base of the stalk. L10 forms an elongated spine to which L12 dimers bind in a sequential fashion forming a multimeric L10(L12)X complex. In terms of processing, one or more lysine residues are methylated.

Its function is as follows. Forms part of the ribosomal stalk which helps the ribosome interact with GTP-bound translation factors. The protein is Large ribosomal subunit protein uL11 of Shewanella piezotolerans (strain WP3 / JCM 13877).